The chain runs to 1377 residues: DNA-directed RNA polymerase subunit beta (1377 aa).

This sequence belongs to the RNA polymerase beta chain family. In terms of assembly, the RNAP catalytic core consists of 2 alpha, 1 beta, 1 beta' and 1 omega subunit. When a sigma factor is associated with the core the holoenzyme is formed, which can initiate transcription.

The enzyme catalyses RNA(n) + a ribonucleoside 5'-triphosphate = RNA(n+1) + diphosphate. Its function is as follows. DNA-dependent RNA polymerase catalyzes the transcription of DNA into RNA using the four ribonucleoside triphosphates as substrates. The polypeptide is DNA-directed RNA polymerase subunit beta (Cereibacter sphaeroides (strain ATCC 17029 / ATH 2.4.9) (Rhodobacter sphaeroides)).